The sequence spans 240 residues: Homeobox-leucine zipper protein HOX14 (240 aa).

A disordered region spans residues 26 to 64 (SGEVQGERPRARRRRRRGARCVGGGGGGGEVDGGDPKKR). Residues 35–44 (RARRRRRRGA) are compositionally biased toward basic residues. A compositionally biased stretch (gly residues) spans 46–56 (CVGGGGGGGEV). The homeobox DNA-binding region spans 59-118 (GDPKKRRLSDEQVEMLELSFREERKLETGRKVHLASELGLDPKQVAVWFQNRRARHKSKL). Residues 108 to 167 (QNRRARHKSKLLEEEFSKLKHAHDAAILHKCHLENEVLRLKERLVVAEEEVRRLRSAAGS) are a coiled coil.

It belongs to the HD-ZIP homeobox family. Class I subfamily. In terms of tissue distribution, expressed in roots, stems, leaf blades and panicles.

The protein localises to the nucleus. Probable transcription factor. This is Homeobox-leucine zipper protein HOX14 (HOX14) from Oryza sativa subsp. japonica (Rice).